We begin with the raw amino-acid sequence, 153 residues long: Ribosome maturation factor RimP (153 aa).

This sequence belongs to the RimP family.

Its subcellular location is the cytoplasm. In terms of biological role, required for maturation of 30S ribosomal subunits. In Clostridioides difficile (strain 630) (Peptoclostridium difficile), this protein is Ribosome maturation factor RimP.